The primary structure comprises 237 residues: Ribonuclease PH (237 aa).

Residues Arg86 and 124 to 126 (GTR) contribute to the phosphate site.

Belongs to the RNase PH family. In terms of assembly, homohexameric ring arranged as a trimer of dimers.

It carries out the reaction tRNA(n+1) + phosphate = tRNA(n) + a ribonucleoside 5'-diphosphate. Functionally, phosphorolytic 3'-5' exoribonuclease that plays an important role in tRNA 3'-end maturation. Removes nucleotide residues following the 3'-CCA terminus of tRNAs; can also add nucleotides to the ends of RNA molecules by using nucleoside diphosphates as substrates, but this may not be physiologically important. Probably plays a role in initiation of 16S rRNA degradation (leading to ribosome degradation) during starvation. The chain is Ribonuclease PH from Coxiella burnetii (strain RSA 331 / Henzerling II).